Here is a 145-residue protein sequence, read N- to C-terminus: Secreted RxLR effector protein 100 (145 aa).

Residues 1-19 (MRYLLLTFFTFHCQMVADA) form the signal peptide. Residues 27 to 30 (RLLR) carry the RxLR motif. The interval 38-77 (SGEGKIEEAGMIVTTGAPTPENETMEHNEVPQSTTDTDQK) is disordered. An N-linked (GlcNAc...) asparagine glycan is attached at N59.

Belongs to the RxLR effector family.

It is found in the secreted. The protein resides in the host nucleus. Its function is as follows. Secreted effector that dos not suppress the host cell death induced by cell death-inducing proteins. In Plasmopara viticola (Downy mildew of grapevine), this protein is Secreted RxLR effector protein 100.